A 224-amino-acid chain; its full sequence is DeSI-like protein At4g17486 (224 aa).

In terms of domain architecture, PPPDE spans 26–163 (TPVYLNVYDL…FCNCLLPESI (138 aa)). Catalysis depends on residues His-51 and Cys-125. The disordered stretch occupies residues 176–201 (EFSDEDESNSEASSVSDEEGSEQHLI).

The protein belongs to the DeSI family.

The sequence is that of DeSI-like protein At4g17486 from Arabidopsis thaliana (Mouse-ear cress).